The chain runs to 584 residues: Myo-inositol transporter 1 (584 aa).

Residues 1–81 (MGIHIPYLTS…TSVMITFNQS (81 aa)) are Cytoplasmic-facing. Position 12 is a phosphothreonine (T12). The interval 13–42 (SQSNVGDAVGNADSVEFNSEHDSPSKRGKI) is disordered. Phosphoserine is present on residues S26, S31, S35, S37, and S46. The segment covering 30–42 (NSEHDSPSKRGKI) has biased composition (basic and acidic residues). A helical membrane pass occupies residues 82–102 (LSPFIITLTFVASISGFMFGY). Residues 103-129 (DTGYISSALISIGTDLDHKVLTYGEKE) lie on the Extracellular side of the membrane. Residues 130–150 (IVTAATSLGALITSIFAGTAA) form a helical membrane-spanning segment. Over 151 to 163 (DIFGRKRCLMGSN) the chain is Cytoplasmic. A helical transmembrane segment spans residues 164–184 (LMFVIGAILQVSAHTFWQMAV). Topologically, residues 185 to 186 (GR) are extracellular. A helical transmembrane segment spans residues 187-207 (LIMGFGVGIGSLIAPLFISEI). Residues 208–215 (APKMIRGR) lie on the Cytoplasmic side of the membrane. Residues 216–236 (LTVINSLWLTGGQLVAYGCGA) traverse the membrane as a helical segment. Residues 237–246 (GLNYVNNGWR) are Extracellular-facing. Residues 247-267 (ILVGLSLIPTAVQFTCLCFLP) form a helical membrane-spanning segment. Over 268-349 (DTPRYYVMKG…IGCGLQAIQQ (82 aa)) the chain is Cytoplasmic. The chain crosses the membrane as a helical span at residues 350–370 (FTGWNSLMYFSGTIFETVGFK). N371 carries N-linked (GlcNAc...) asparagine glycosylation. Residues 371–376 (NSSAVS) lie on the Extracellular side of the membrane. Residues 377-397 (IIVSGTNFIFTLVAFFSIDKI) form a helical membrane-spanning segment. The Cytoplasmic segment spans residues 398 to 400 (GRR). A helical transmembrane segment spans residues 401–421 (TILLIGLPGMTMALVVCSIAF). Residues 422-441 (HFLGIKFDGAVAVVVSSGFS) lie on the Extracellular side of the membrane. Residues 442-462 (SWGIVIIVFIIVFAAFYALGI) form a helical membrane-spanning segment. The Cytoplasmic segment spans residues 463 to 486 (GTVPWQQSELFPQNVRGIGTSYAT). A helical transmembrane segment spans residues 487–507 (ATNWAGSLVIASTFLTMLQNI). The Extracellular portion of the chain corresponds to 508–510 (TPA). The chain crosses the membrane as a helical span at residues 511 to 531 (GTFAFFAGLSCLSTIFCYFCY). Residues 532–584 (PELSGLELEEVQTILKDGFNIKASKALAKKRKQQVARVHELKYEPTQEIIEDI) are Cytoplasmic-facing. K573 participates in a covalent cross-link: Glycyl lysine isopeptide (Lys-Gly) (interchain with G-Cter in ubiquitin).

It belongs to the major facilitator superfamily. Sugar transporter (TC 2.A.1.1) family.

It is found in the cell membrane. It catalyses the reaction myo-inositol(out) + H(+)(out) = myo-inositol(in) + H(+)(in). Major transporter for myo-inositol. The protein is Myo-inositol transporter 1 (ITR1) of Saccharomyces cerevisiae (strain ATCC 204508 / S288c) (Baker's yeast).